An 810-amino-acid chain; its full sequence is AMP deaminase (810 aa).

Over residues 1-10 the composition is skewed to polar residues; it reads MDNQATQRLN. Disordered stretches follow at residues 1–61 and 114–137; these read MDNQ…SHES and AAMN…PRTL. Residues Ser-19, Ser-58, and Ser-61 each carry the phosphoserine modification. Positions 125 to 137 are enriched in polar residues; sequence HASQNSGGKPRTL. Residue Ser-138 is modified to Phosphoserine. 2 residues coordinate Zn(2+): His-362 and His-364. Substrate contacts are provided by residues His-364 and 433 to 438; that span reads KFNLKY. His-630 is a binding site for Zn(2+). Glu-633 lines the substrate pocket. His-652 functions as the Proton acceptor in the catalytic mechanism. Residue Asp-707 coordinates Zn(2+). 708–711 contacts substrate; it reads DPLQ.

This sequence belongs to the metallo-dependent hydrolases superfamily. Adenosine and AMP deaminases family. In terms of assembly, homotetramer. Zn(2+) is required as a cofactor.

It catalyses the reaction AMP + H2O + H(+) = IMP + NH4(+). It functions in the pathway purine metabolism; IMP biosynthesis via salvage pathway; IMP from AMP: step 1/1. Its function is as follows. AMP deaminase plays a critical role in energy metabolism. This is AMP deaminase (AMD1) from Saccharomyces cerevisiae (strain ATCC 204508 / S288c) (Baker's yeast).